The following is a 417-amino-acid chain: Histidine--tRNA ligase (417 aa).

It belongs to the class-II aminoacyl-tRNA synthetase family. In terms of assembly, homodimer.

The protein localises to the cytoplasm. The catalysed reaction is tRNA(His) + L-histidine + ATP = L-histidyl-tRNA(His) + AMP + diphosphate + H(+). This is Histidine--tRNA ligase from Caldanaerobacter subterraneus subsp. tengcongensis (strain DSM 15242 / JCM 11007 / NBRC 100824 / MB4) (Thermoanaerobacter tengcongensis).